The chain runs to 418 residues: Trimethyllysine dioxygenase, mitochondrial (418 aa).

3 residues coordinate Fe cation: H239, D241, and H386.

Belongs to the gamma-BBH/TMLD family. In terms of assembly, homodimer. It depends on Fe(2+) as a cofactor. L-ascorbate is required as a cofactor.

It is found in the mitochondrion matrix. It carries out the reaction N(6),N(6),N(6)-trimethyl-L-lysine + 2-oxoglutarate + O2 = (3S)-3-hydroxy-N(6),N(6),N(6)-trimethyl-L-lysine + succinate + CO2. It participates in amine and polyamine biosynthesis; carnitine biosynthesis. Converts trimethyllysine (TML) into hydroxytrimethyllysine (HTML). This Gallus gallus (Chicken) protein is Trimethyllysine dioxygenase, mitochondrial (TMLHE).